The primary structure comprises 444 residues: N-succinylarginine dihydrolase (444 aa).

Substrate-binding positions include 19 to 28 (SGLSVGNIAS), N110, and 137 to 138 (HR). Residue E174 is part of the active site. Substrate is bound at residue R214. The active site involves H250. Residues D252 and N362 each coordinate substrate. C368 serves as the catalytic Nucleophile.

Belongs to the succinylarginine dihydrolase family. As to quaternary structure, homodimer.

The enzyme catalyses N(2)-succinyl-L-arginine + 2 H2O + 2 H(+) = N(2)-succinyl-L-ornithine + 2 NH4(+) + CO2. It functions in the pathway amino-acid degradation; L-arginine degradation via AST pathway; L-glutamate and succinate from L-arginine: step 2/5. Functionally, catalyzes the hydrolysis of N(2)-succinylarginine into N(2)-succinylornithine, ammonia and CO(2). In Aliivibrio salmonicida (strain LFI1238) (Vibrio salmonicida (strain LFI1238)), this protein is N-succinylarginine dihydrolase.